We begin with the raw amino-acid sequence, 530 residues long: Type 2 DNA topoisomerase 6 subunit B (530 aa).

Residues N42, D76, 96 to 98, 107 to 113, and K427 each bind ATP; these read SSK and MYGLGVK.

Belongs to the TOP6B family. In terms of assembly, homodimer. Heterotetramer of two Top6A and two Top6B chains.

It carries out the reaction ATP-dependent breakage, passage and rejoining of double-stranded DNA.. With respect to regulation, not inhibited by the DNA gyrase inhibitor novobiocin, instead inhibited by eukaryotic topoisomerase inhibitors such as m- and o-amsacrine, ellipticine, and the quinolone CP-115,953. Radicicol inhibits the ATPase activity. In terms of biological role, relaxes both positive and negative supercoils and exhibits a strong decatenase and unknotting activity; it cannot introduce DNA supercoils. ATP is absolutely required for DNA cleavage; the nonhydrolyzable analog AMP-PNP generates nicked or linear products from a supercoiled dsDNA substrate. Generates staggered two-nucleotide long 5' overhangs. The enzyme is covalently attached transiently to the 5'-ends of the cleaved strands. This Saccharolobus shibatae (strain ATCC 51178 / DSM 5389 / JCM 8931 / NBRC 15437 / B12) (Sulfolobus shibatae) protein is Type 2 DNA topoisomerase 6 subunit B.